A 594-amino-acid polypeptide reads, in one-letter code: Homeobox protein prospero homolog 1 (594 aa).

Composition is skewed to polar residues over residues 1 to 13 and 36 to 50; these read MSSG…ATAQ and PPVN…SSNR. 3 disordered regions span residues 1–20, 30–180, and 358–389; these read MSSG…NGFS, IYYS…FQPQ, and DTSS…SASA. A compositionally biased stretch (low complexity) spans 73 to 101; the sequence is STSVSSNSSSSSSTSNTNSTPSSSSTSSK. Positions 105 to 117 are enriched in polar residues; the sequence is EGMTETETMTASI. Residues 118–135 show a composition bias toward basic and acidic residues; that stretch reads EQEKVIQNEESEAGKDGM. Over residues 136–162 the composition is skewed to acidic residues; it reads EEHDDGMNDFEIIDDTNDEVEESEERE. Positions 369 to 378 are enriched in basic and acidic residues; sequence KVEIKKEDAM. Low complexity predominate over residues 379-389; that stretch reads SSRASPLSASA. Residues 435–493 enclose the Prospero-type homeo domain; it reads SSMLTPMHLRKAKLMFFYTRYPNSNLLKSYFPDIRFNKNNTAQLVKWFSNFREFYYNQM. The segment at 435–593 is homeo-Prospero; the sequence is SSMLTPMHLR…KEPNFLERLE (159 aa). Residues 494-593 enclose the Prospero domain; the sequence is EKFARQALAE…KEPNFLERLE (100 aa).

Belongs to the Prospero homeodomain family.

The protein resides in the nucleus. In terms of biological role, transcription factor involved in developmental processes. Controls the transcription of genes required for excretory canal formation. In Caenorhabditis elegans, this protein is Homeobox protein prospero homolog 1.